Consider the following 2582-residue polypeptide: Chromodomain-helicase-DNA-binding protein 8 (2582 aa).

Disordered stretches follow at residues 22–111 (DDSF…PVLQ), 136–155 (MGVS…PSQS), 253–283 (VKGS…TQGE), and 349–377 (QKIQ…PLTL). Composition is skewed to polar residues over residues 42–51 (SLDSLDQMNQ), 94–111 (DYTT…PVLQ), and 141–155 (TGVS…PSQS). Residues 255-267 (GSAPAGNPGAAGP) show a composition bias toward low complexity. Over residues 355–372 (PQPPSSQPQPQPQPPPSA) the composition is skewed to pro residues. At S434 the chain carries Phosphoserine. Disordered stretches follow at residues 475–585 (RARG…VKRK) and 598–617 (DEEE…PILP). Positions 495–518 (RPEEEGEKKRRKKSSGERLKEEKP) are enriched in basic and acidic residues. A phosphoserine mark is found at S555 and S564. Residues 574-585 (QKRRSNRQVKRK) are compositionally biased toward basic residues. A Glycyl lysine isopeptide (Lys-Gly) (interchain with G-Cter in SUMO) cross-link involves residue K611. 2 consecutive Chromo domains span residues 644–711 (AIVD…AQMR) and 726–792 (VEVD…RVNR). In terms of domain architecture, Helicase ATP-binding spans 825 to 999 (LFNWYNRQNC…FSLLHFLEPS (175 aa)). 838–845 (DEMGLGKT) provides a ligand contact to ATP. The DEAH box signature appears at 950 to 953 (DEAH). The Helicase C-terminal domain maps to 1139–1290 (LIDKLLPKLK…KAVLQSMSGR (152 aa)). A phosphoserine mark is found at S1422 and S1426. The interval 1694-1715 (EDPEYKPLQGPPKDPDDEGDPL) is disordered. The interval 1791-2304 (IARREKQQRW…LVELEVECME (514 aa)) is interaction with FAM124B. 2 positions are modified to phosphoserine: S1978 and S1980. Residues 1990–2019 (QCTSRTASPSPLRPDAPVEKSPEESTVQVP) are disordered. T1995 is modified (phosphothreonine). A phosphoserine mark is found at S1997, S1999, and S2010. K2027 participates in a covalent cross-link: Glycyl lysine isopeptide (Lys-Gly) (interchain with G-Cter in SUMO2). Phosphoserine is present on residues S2040, S2070, and S2072. Residues 2045–2120 (VRVGSSDTAP…RSRPKLYDEE (76 aa)) form a disordered region. Residues 2065–2074 (EDEDDSDSEL) show a composition bias toward acidic residues. Residues 2077–2096 (SKLSPSSSSSSSSSSSSSST) are compositionally biased toward low complexity. The span at 2104-2118 (EEKLTADRSRPKLYD) shows a compositional bias: basic and acidic residues. Phosphoserine occurs at positions 2184, 2202, and 2204. A disordered region spans residues 2187-2233 (VTAGGILGPGNHLLDSPSLTPGEDGDSPVPTPRSGSAASMAEEEASA). Phosphothreonine is present on T2206. The residue at position 2213 (S2213) is a Phosphoserine. Phosphothreonine is present on T2217. Positions 2222–2233 (SAASMAEEEASA) are enriched in low complexity. S2225 is modified (phosphoserine). K2258 participates in a covalent cross-link: Glycyl lysine isopeptide (Lys-Gly) (interchain with G-Cter in SUMO2). The segment at 2486–2582 (HVDSSTMLHH…NSDSSEDADD (97 aa)) is disordered. Positions 2493-2511 (LHHHHHHPHPHHHHHHHPG) are enriched in basic residues. Low complexity predominate over residues 2514-2529 (TTGYPSSPATTTSGTA). S2520 carries the post-translational modification Phosphoserine. Acidic residues predominate over residues 2537–2551 (PEDDDEEEDEEDDDL).

It belongs to the SNF2/RAD54 helicase family. CHD8 subfamily. Interacts with CTNNB1 and PIAS3. Component of some MLL1/MLL complex, at least composed of the core components KMT2A/MLL1, ASH2L, HCFC1/HCF1, WDR5 and RBBP5, as well as the facultative components BACC1, CHD8, E2F6, HSP70, INO80C, KANSL1, LAS1L, MAX, MCRS1, MGA, KAT8/MOF, PELP1, PHF20, PRP31, RING2, RUVB1/TIP49A, RUVB2/TIP49B, SENP3, TAF1, TAF4, TAF6, TAF7, TAF9 and TEX10. Interacts with CHD7. Interacts with FAM124B. Interacts with p53/TP53 and histone H1. Interacts with CTCF. Interacts with TLK2. Interacts with HNRNPL in an RNA-dependent manner. Sumoylated.

It is found in the nucleus. The enzyme catalyses ATP + H2O = ADP + phosphate + H(+). Functionally, ATP-dependent chromatin-remodeling factor, it slides nucleosomes along DNA; nucleosome sliding requires ATP. Acts as a transcription repressor by remodeling chromatin structure and recruiting histone H1 to target genes. Suppresses p53/TP53-mediated apoptosis by recruiting histone H1 and preventing p53/TP53 transactivation activity. Acts as a negative regulator of Wnt signaling pathway by regulating beta-catenin (CTNNB1) activity. Negatively regulates CTNNB1-targeted gene expression by being recruited specifically to the promoter regions of several CTNNB1 responsive genes. Involved in both enhancer blocking and epigenetic remodeling at chromatin boundary via its interaction with CTCF. Acts as a suppressor of STAT3 activity by suppressing the LIF-induced STAT3 transcriptional activity. Also acts as a transcription activator via its interaction with ZNF143 by participating in efficient U6 RNA polymerase III transcription. Regulates alternative splicing of a core group of genes involved in neuronal differentiation, cell cycle and DNA repair. Enables H3K36me3-coupled transcription elongation and co-transcriptional RNA processing likely via interaction with HNRNPL. The polypeptide is Chromodomain-helicase-DNA-binding protein 8 (Mus musculus (Mouse)).